Consider the following 117-residue polypeptide: Large ribosomal subunit protein bL20 (117 aa).

This sequence belongs to the bacterial ribosomal protein bL20 family.

Functionally, binds directly to 23S ribosomal RNA and is necessary for the in vitro assembly process of the 50S ribosomal subunit. It is not involved in the protein synthesizing functions of that subunit. The protein is Large ribosomal subunit protein bL20 (rplT) of Synechocystis sp. (strain ATCC 27184 / PCC 6803 / Kazusa).